Consider the following 1992-residue polypeptide: Otoferlin (1992 aa).

C2 domains follow at residues 1 to 98 (MALV…EVSD), 241 to 362 (KRSK…HKWA), and 405 to 536 (IEGN…FLPT). Residues 1–1958 (MALVVHLKTV…IRYFIWHNYR (1958 aa)) are Cytoplasmic-facing. Positions 655 to 699 (PALAKKKKEGGGESEEEESELIHNSSEEEAEDDGDLTSVPSTPPM) are disordered. 2 consecutive C2 domains span residues 952–1077 (IQAV…PPRF) and 1124–1250 (RGPI…NNWA). The Ca(2+) site is built by Asp984, Asp990, Asp1046, and Asp1048. A coiled-coil region spans residues 1282–1363 (VKVDLNEDEK…ESAEIKADDF (82 aa)). Disordered regions lie at residues 1288–1311 (EDEKEKEKKKKKKKKGEEVEEEEP) and 1354–1399 (ESAE…KPKV). Basic and acidic residues predominate over residues 1356–1399 (AEIKADDFPMKGTKPKEKSKDKKSTKDKKKNNDGTEKRPPKPKV). C2 domains are found at residues 1470–1588 (DPNM…ATCG) and 1711–1860 (PAPG…KQCS). Residues Asp1503, Asp1509, Asp1558, Asp1560, Asp1566, Asp1831, Ser1834, and Asp1837 each coordinate Ca(2+). The helical transmembrane segment at 1959-1979 (WLILKALALLLLLLLVGLFLY) threads the bilayer. Residues 1980–1992 (SIPGYLVKKLLGA) lie on the Extracellular side of the membrane.

Belongs to the ferlin family. Requires Ca(2+) as cofactor.

The protein resides in the cytoplasmic vesicle. Its subcellular location is the secretory vesicle. It is found in the synaptic vesicle membrane. The protein localises to the basolateral cell membrane. It localises to the endoplasmic reticulum membrane. The protein resides in the golgi apparatus membrane. Its subcellular location is the presynaptic cell membrane. It is found in the cell membrane. Functionally, key calcium ion sensor involved in the Ca(2+)-triggered synaptic vesicle-plasma membrane fusion and in the control of neurotransmitter release at these output synapses. The chain is Otoferlin (otof) from Danio rerio (Zebrafish).